Consider the following 197-residue polypeptide: Holliday junction branch migration complex subunit RuvA (197 aa).

The interval 1 to 63 (MINKIHGKVI…ENELKLFGFL (63 aa)) is domain I. The segment at 64–139 (NSDEREIFKE…KLLINSELES (76 aa)) is domain II. Ser-139 is a region of interest (flexible linker). Positions 140–197 (TGLFRFKELEESIVSMGFDRKIVNSKIREAFNLAEFANLKDSEKEQFLFKEVLKRISN) are domain III.

This sequence belongs to the RuvA family. As to quaternary structure, homotetramer. Forms an RuvA(8)-RuvB(12)-Holliday junction (HJ) complex. HJ DNA is sandwiched between 2 RuvA tetramers; dsDNA enters through RuvA and exits via RuvB. An RuvB hexamer assembles on each DNA strand where it exits the tetramer. Each RuvB hexamer is contacted by two RuvA subunits (via domain III) on 2 adjacent RuvB subunits; this complex drives branch migration. In the full resolvosome a probable DNA-RuvA(4)-RuvB(12)-RuvC(2) complex forms which resolves the HJ.

Its subcellular location is the cytoplasm. Its function is as follows. The RuvA-RuvB-RuvC complex processes Holliday junction (HJ) DNA during genetic recombination and DNA repair, while the RuvA-RuvB complex plays an important role in the rescue of blocked DNA replication forks via replication fork reversal (RFR). RuvA specifically binds to HJ cruciform DNA, conferring on it an open structure. The RuvB hexamer acts as an ATP-dependent pump, pulling dsDNA into and through the RuvAB complex. HJ branch migration allows RuvC to scan DNA until it finds its consensus sequence, where it cleaves and resolves the cruciform DNA. This is Holliday junction branch migration complex subunit RuvA from Borreliella burgdorferi (strain ATCC 35210 / DSM 4680 / CIP 102532 / B31) (Borrelia burgdorferi).